The sequence spans 312 residues: Olfactory receptor 6C76 (312 aa).

Over 1-23 (MKNRTSVTDFILLGLTDNPQLQV) the chain is Extracellular. Asn3 carries an N-linked (GlcNAc...) asparagine glycan. The chain crosses the membrane as a helical span at residues 24–44 (VIFSFLFLTYVLSVTGNLTII). At 45 to 57 (SLTLLDSHLKTPM) the chain is on the cytoplasmic side. Residues 58–80 (YFFLRNFSLEISFTSVCNPRFLI) form a helical membrane-spanning segment. At 81–94 (SILTGDKSISYNAC) the chain is on the extracellular side. The cysteines at positions 94 and 176 are disulfide-linked. A helical membrane pass occupies residues 95 to 115 (AAQLFFFIFLGSTEFFLLASM). The Cytoplasmic segment spans residues 116–142 (SYDCYVAICKPLHYTTIMSDRICYQLI). Residues 143–163 (ISSWLAGFLVIFPPLAMGLQL) form a helical membrane-spanning segment. The Extracellular segment spans residues 164–195 (DFCDSNVIDHFTCDSAPLLQISCTDTSTLELM). Residues 196–216 (SFILALFTLISTLILVILSYT) traverse the membrane as a helical segment. Topologically, residues 217–238 (YIIRTILRIPSAQQRKKAFSTC) are cytoplasmic. The chain crosses the membrane as a helical span at residues 239–259 (SSHVIVVSISYGSCIFMYVKT). The Extracellular portion of the chain corresponds to 260-267 (SAKEGVAL). Residues 268 to 288 (TKGVAILNTSVAPMLNPFIYT) traverse the membrane as a helical segment. The Cytoplasmic segment spans residues 289–312 (LRNQQVKQAFKDVLRKISHKKKKH).

It belongs to the G-protein coupled receptor 1 family.

The protein resides in the cell membrane. In terms of biological role, odorant receptor. This is Olfactory receptor 6C76 (OR6C76) from Homo sapiens (Human).